The sequence spans 525 residues: MSWHPQYRSSKFRHVFGKPASKENCYDSVPITHSVQDNHFCAVNPHFIAVVTECTGGGAFLVIPLHQTGKLDPHYPKVCGHRGNVLDVKWNPFNDFEIASCSEDATIKIWDIPKQLLTKNLTAFRKELVGHARKVGLVEWHPTAANILFSSGYDYKVMVWNLDSKESVIMSPVKTINCHQDVILSMSFNTNGSLLATACKDRKIRVLDPRAGTVLQEANYKGHRANKVLFLGNLKKLLSTGTSRWNNRQMALWDQDDLSVPVTEVDLDGSSGVLFPFYDADTNMLYVVGKGDRNIHYYEISANKPHLNYLMEYHSYNPQKGIGVMPKRGLDVSSCEIFRFYKLITTKSLIEPVSMIVPRRSESYQEDIYPPTASAQPSLTAQEWLSGMNKEPVLMSLRPGAEPLSPQPLPSERTLSMPTAPTSPHLFNQTESLVAEDGRRPFSLLEEKAPRWAAEHRQEEKKTWLSDGFDIFECPPPKTENELLQMFYRQQDEIRRLRELVTQREVQAKQLELEIRNLRMNSPRL.

WD repeat units follow at residues 80–120 (GHRG…LTKN), 130–170 (GHAR…SVIM), 178–217 (CHQD…VLQE), 220–263 (YKGH…VPVT), and 269–308 (GSSG…PHLN). The stretch at 485 to 524 (QMFYRQQDEIRRLRELVTQREVQAKQLELEIRNLRMNSPR) forms a coiled coil.

This sequence belongs to the WD repeat coronin family. In terms of assembly, binds actin. Component of the N-Cor repressor complex, at least composed of NCOR1, NCOR2, HDAC3, TBL1X, TBL1R, CORO2A and GPS2.

The sequence is that of Coronin-2A (CORO2A) from Bos taurus (Bovine).